Here is a 395-residue protein sequence, read N- to C-terminus: Inner membrane protein YjgN (395 aa).

At 1–24 (MNNVISSKDNHNHTLVFTGKGGKY) the chain is on the cytoplasmic side. Residues 25–45 (FVICLVNFLLTCITLGIYAPW) traverse the membrane as a helical segment. Over 46–71 (AMVKCRRYIYTNMTLNNQPFAYKATG) the chain is Periplasmic. Residues 72-92 (GALFISVLLVFIIYIVSLSLI) traverse the membrane as a helical segment. At 93–95 (EHG) the chain is on the cytoplasmic side. A helical membrane pass occupies residues 96–116 (HPGLGFTLFGLLIAIIPFMAV). Residues 117–146 (KGLQYQAMMTSLNGVHFGFQCSMRRAWWYM) lie on the Periplasmic side of the membrane. The helical transmembrane segment at 147–167 (FALPVLLMVALYIVLYIISLV) threads the bilayer. Position 168 (T168) is a topological domain, cytoplasmic. The helical transmembrane segment at 169-189 (IAVGGLVFSIVFLGLLAIIGI) threads the bilayer. At 190–229 (GVINGITYSKWMTLFGNGANFGIHRFSIQVNVKTCIRGCV) the chain is on the periplasmic side. Residues 230 to 250 (LAMLTLFPFAVVIGYLIAPVF) form a helical membrane-spanning segment. Residues 251-275 (TDMILLSMMGNAQAGGALILQYYGQ) are Cytoplasmic-facing. The helical transmembrane segment at 276 to 296 (IMACYFLYFLAIIVVTSYLYV) threads the bilayer. Over 297–327 (ALRNLFLNNLSLANDSIRFHSSVTAHGMLWR) the chain is Periplasmic. The chain crosses the membrane as a helical span at residues 328 to 348 (LLVVFVISGVTLGLAYPWLKI). At 349–395 (WLVSWLAQNTQVQGDLDSLELTNDEKPLENSPLMWISRGIMPYFPFI) the chain is on the cytoplasmic side.

The protein localises to the cell inner membrane. This Salmonella typhimurium (strain LT2 / SGSC1412 / ATCC 700720) protein is Inner membrane protein YjgN (yjgN).